Consider the following 529-residue polypeptide: UDP-glycosyltransferase (529 aa).

Asn70 and Asn420 each carry an N-linked (GlcNAc...) asparagine glycan. Residues 504–524 traverse the membrane as a helical segment; it reads LDLYLVYIALFAVPVGAVRWI.

Belongs to the glycosyltransferase 28 family.

The protein localises to the membrane. The enzyme catalyses stromemycin aglycone + UDP-alpha-D-glucose = stromemycin + UDP + H(+). It participates in mycotoxin biosynthesis. Functionally, UDP-glycosyltransferase; part of the gene cluster that mediates the biosynthesis of stromemycin, a depside C-glucoside with two unsaturated C9 side chains belonging to aromatic polyketide glycosides. Acts as the tailoring enzyme responsible for 3-C-glucosylation of bininalkenylresorcylic acid to yield stromemycin. This chain is UDP-glycosyltransferase, found in Talaromyces amestolkiae.